The primary structure comprises 890 residues: DNA mismatch repair protein MutS (890 aa).

ATP is bound at residue 645 to 652 (GPNMAGKS).

Belongs to the DNA mismatch repair MutS family.

Its function is as follows. This protein is involved in the repair of mismatches in DNA. It is possible that it carries out the mismatch recognition step. This protein has a weak ATPase activity. The sequence is that of DNA mismatch repair protein MutS from Rickettsia rickettsii (strain Iowa).